An 894-amino-acid chain; its full sequence is Alpha-actinin-2 (894 aa).

The segment at 1–254 (MNQIEPGVQY…IMTYVSCFYH (254 aa)) is actin-binding. Calponin-homology (CH) domains are found at residues 38 to 142 (KQQR…LRFA) and 151 to 257 (TSAK…HAFA). A Phosphothreonine modification is found at Thr-237. Spectrin repeat units follow at residues 281 to 391 (RLME…WLLN), 401 to 506 (HLAE…ALER), 516 to 627 (QLHL…SLQE), and 637 to 740 (RLRR…EVET). EF-hand domains are found at residues 753 to 788 (EQMN…MGYD) and 789 to 824 (LGEA…ETAD). The Ca(2+) site is built by Asp-766, Asn-770, Asp-777, Asp-802, Asn-804, and Thr-808.

It belongs to the alpha-actinin family. As to quaternary structure, homodimer; antiparallel. Also forms heterodimers with ACTN3. Interacts with ADAM12, MYOZ1, MYOZ2 and MYOZ3. Interacts via its C-terminal region with the LDB3 PDZ domain. Interacts with XIRP2. Interacts with DST (via N-terminus). Interacts with PARVB. Interacts with SYNPO2. Post-translationally, ubiquitinated by FBXL22, leading to proteasomal degradation.

The protein resides in the cytoplasm. The protein localises to the myofibril. Its subcellular location is the sarcomere. It localises to the z line. In terms of biological role, F-actin cross-linking protein which is thought to anchor actin to a variety of intracellular structures. This is a bundling protein. The sequence is that of Alpha-actinin-2 (ACTN2) from Bos taurus (Bovine).